Reading from the N-terminus, the 340-residue chain is Ketol-acid reductoisomerase (NADP(+)) (340 aa).

The KARI N-terminal Rossmann domain maps to 1–183; that stretch reads MAITVYYDKD…GGGRTGIIET (183 aa). Residues 26–29, Arg49, Ser52, Ser54, and 84–87 each bind NADP(+); these read FGSQ and DEIQ. His109 is an active-site residue. NADP(+) is bound at residue Gly135. The KARI C-terminal knotted domain maps to 184-329; the sequence is TFKAETETDL…RNLRAMMPWI (146 aa). Mg(2+) is bound by residues Asp192, Glu196, Glu228, and Glu232. Ser253 is a substrate binding site.

The protein belongs to the ketol-acid reductoisomerase family. Mg(2+) is required as a cofactor.

The catalysed reaction is (2R)-2,3-dihydroxy-3-methylbutanoate + NADP(+) = (2S)-2-acetolactate + NADPH + H(+). It catalyses the reaction (2R,3R)-2,3-dihydroxy-3-methylpentanoate + NADP(+) = (S)-2-ethyl-2-hydroxy-3-oxobutanoate + NADPH + H(+). The protein operates within amino-acid biosynthesis; L-isoleucine biosynthesis; L-isoleucine from 2-oxobutanoate: step 2/4. It functions in the pathway amino-acid biosynthesis; L-valine biosynthesis; L-valine from pyruvate: step 2/4. In terms of biological role, involved in the biosynthesis of branched-chain amino acids (BCAA). Catalyzes an alkyl-migration followed by a ketol-acid reduction of (S)-2-acetolactate (S2AL) to yield (R)-2,3-dihydroxy-isovalerate. In the isomerase reaction, S2AL is rearranged via a Mg-dependent methyl migration to produce 3-hydroxy-3-methyl-2-ketobutyrate (HMKB). In the reductase reaction, this 2-ketoacid undergoes a metal-dependent reduction by NADPH to yield (R)-2,3-dihydroxy-isovalerate. This chain is Ketol-acid reductoisomerase (NADP(+)), found in Campylobacter jejuni subsp. jejuni serotype O:23/36 (strain 81-176).